Reading from the N-terminus, the 315-residue chain is Ribosomal RNA small subunit methyltransferase H (315 aa).

Residues 35 to 37 (GGH), Asp55, Phe80, Asp102, and Gln109 contribute to the S-adenosyl-L-methionine site.

This sequence belongs to the methyltransferase superfamily. RsmH family.

Its subcellular location is the cytoplasm. The enzyme catalyses cytidine(1402) in 16S rRNA + S-adenosyl-L-methionine = N(4)-methylcytidine(1402) in 16S rRNA + S-adenosyl-L-homocysteine + H(+). Functionally, specifically methylates the N4 position of cytidine in position 1402 (C1402) of 16S rRNA. This is Ribosomal RNA small subunit methyltransferase H from Buchnera aphidicola subsp. Baizongia pistaciae (strain Bp).